Reading from the N-terminus, the 144-residue chain is D-aminoacyl-tRNA deacylase (144 aa).

Residues 137 to 138 carry the Gly-cisPro motif, important for rejection of L-amino acids motif; sequence GP.

It belongs to the DTD family. In terms of assembly, homodimer.

The protein resides in the cytoplasm. It carries out the reaction glycyl-tRNA(Ala) + H2O = tRNA(Ala) + glycine + H(+). The enzyme catalyses a D-aminoacyl-tRNA + H2O = a tRNA + a D-alpha-amino acid + H(+). In terms of biological role, an aminoacyl-tRNA editing enzyme that deacylates mischarged D-aminoacyl-tRNAs. Also deacylates mischarged glycyl-tRNA(Ala), protecting cells against glycine mischarging by AlaRS. Acts via tRNA-based rather than protein-based catalysis; rejects L-amino acids rather than detecting D-amino acids in the active site. By recycling D-aminoacyl-tRNA to D-amino acids and free tRNA molecules, this enzyme counteracts the toxicity associated with the formation of D-aminoacyl-tRNA entities in vivo and helps enforce protein L-homochirality. The sequence is that of D-aminoacyl-tRNA deacylase from Acinetobacter baumannii (strain SDF).